A 230-amino-acid polypeptide reads, in one-letter code: Ion-translocating oxidoreductase complex subunit E (230 aa).

Residues 1-17 (MSENRTLMLNGMWNNNP) are Cytoplasmic-facing. 2 consecutive transmembrane segments (helical) span residues 18 to 38 (ALVQ…VTNA) and 39 to 59 (LGLG…VSLV). The Cytoplasmic segment spans residues 60-68 (RDYVPKEVR). A helical membrane pass occupies residues 69-89 (IPVFVMIIASLVTCVQLLMNA). Residues 90 to 92 (YAY) are Periplasmic-facing. The helical transmembrane segment at 93-113 (GLYLSLGIFIPLIVTNCIIIG) threads the bilayer. The Cytoplasmic portion of the chain corresponds to 114-123 (RAEAFASKND). The helical transmembrane segment at 124 to 144 (VLPAALDGFWMGLGMTSVLVV) threads the bilayer. At 145–181 (LGSLREIIGNGTLFDGADLLLGEWAKVLRIEVFHFDS) the chain is on the periplasmic side. Residues 182 to 202 (AFLLALLPPGAFIGVGFLIAA) traverse the membrane as a helical segment. The Cytoplasmic segment spans residues 203 to 230 (KSVIDKQIAARQPKQQKQAIERARVTNV).

It belongs to the NqrDE/RnfAE family. In terms of assembly, the complex is composed of six subunits: RnfA, RnfB, RnfC, RnfD, RnfE and RnfG.

It is found in the cell inner membrane. Its function is as follows. Part of a membrane-bound complex that couples electron transfer with translocation of ions across the membrane. This chain is Ion-translocating oxidoreductase complex subunit E, found in Vibrio cholerae serotype O1 (strain ATCC 39541 / Classical Ogawa 395 / O395).